The chain runs to 147 residues: SPI-1 type 3 secretion system pilotin (147 aa).

The signal sequence occupies residues 1–15 (MKKFYSCLPVFLLIG). The N-palmitoyl cysteine moiety is linked to residue Cys16. Residue Cys16 is the site of S-diacylglycerol cysteine attachment.

The protein belongs to the InvH family.

The protein localises to the cell outer membrane. Its function is as follows. Involved in the synthesis of the type III secretion system (T3SS), also called injectisome, which is used to inject bacterial effector proteins into eukaryotic host cells. Pilot protein that is required for the proper localization of the secretin InvG/SctC in the outer membrane. Necessary for efficient adherence and entry of these organisms into cultured epithelial cells. The polypeptide is SPI-1 type 3 secretion system pilotin (Salmonella choleraesuis (strain SC-B67)).